The chain runs to 817 residues: Two pore calcium channel protein 1 (817 aa).

Residues 1–101 (MSVILDDDVL…PKDARALAAY (101 aa)) lie on the Cytoplasmic side of the membrane. Positions 22–66 (PLTPSNGLGQEDLPSKNGGGQSGPNSQVPSLVSGADSPPSSPPGH) are disordered. Residues 102–122 (LFVHNHFFYMMELLTALLLLL) form a helical membrane-spanning segment. Topologically, residues 123-137 (LSLCESPAVPALKLR) are extracellular. The chain crosses the membrane as a helical span at residues 138–158 (TYVHATLELFALMVVVFELCM). The Cytoplasmic segment spans residues 159–172 (KLRWLGFHTFVRHK). A helical membrane pass occupies residues 173–193 (RTMVKTSVLVVQFIEAIVVLV). Over 194 to 202 (RQTSHVRVT) the chain is Extracellular. Residues 203-221 (RALRCIFLVDCRYCGGVRR) form a helical membrane-spanning segment. Residues 222 to 235 (NLRQIFQSLPPFMD) lie on the Cytoplasmic side of the membrane. A helical membrane pass occupies residues 236–256 (ILLLLLFFMIIFAILGFYLFS). Topologically, residues 257 to 263 (TNPSDPY) are extracellular. The segment at residues 264–287 (FNTLENSIVNLFVLLTTANFPDVM) is an intramembrane region (helical; Pore-forming). Over 288-298 (MPSYSRNPWSC) the chain is Extracellular. Residues 299 to 319 (VFFIVYLSIELYFIMNLLLAV) form a helical membrane-spanning segment. Topologically, residues 320-445 (VFDTFNDIEK…NILVNSKAFQ (126 aa)) are cytoplasmic. A helical membrane pass occupies residues 446-466 (YFMYLVVAVNGVWILVETFML). At 467–480 (KGGNFISKHVPWSY) the chain is on the extracellular side. Residues 481–501 (LVFLTIYGVELFMKVAGLGPV) traverse the membrane as a helical segment. Over 502 to 504 (EYL) the chain is Cytoplasmic. A helical membrane pass occupies residues 505 to 527 (SSGWNLFDFSVTAFAFLGLLALT). Over 528 to 535 (LNMEPFYF) the chain is Extracellular. A helical transmembrane segment spans residues 536–550 (IVVLRPLQLLRLFKL). The Cytoplasmic portion of the chain corresponds to 551-574 (KKRYRNVLDTMFELLPRMASLGLT). A helical transmembrane segment spans residues 575-595 (LLTFYYSFAIVGMEFFSGRLS). Residues 596–630 (PNCCNSSTVADAYRFINHTVGNKTKVEEGYYYLNN) lie on the Extracellular side of the membrane. The segment at residues 631–654 (FDNILNSFVTLFELTVVNNWYIIM) is an intramembrane region (helical; Pore-forming). The Extracellular segment spans residues 655–671 (EGVTSQTSHWSRLYFMT). A helical membrane pass occupies residues 672-692 (FYIVTMVVMTIIVAFILEAFV). At 693–817 (FRMNYSRKSQ…GSRQRSQTVT (125 aa)) the chain is on the cytoplasmic side. Positions 770-794 (SLKMYQEEIQEWYEEHAREQEQQQL) form a coiled coil. The tract at residues 785–817 (HAREQEQQQLRGSAPSPAAQQTPGSRQRSQTVT) is disordered. Residues 802-817 (AAQQTPGSRQRSQTVT) are compositionally biased toward polar residues.

It belongs to the calcium channel alpha-1 subunit (TC 1.A.1.11) family. Two pore calcium channel subfamily. As to quaternary structure, dimer. Interacts with MTOR; the interaction is required for TPCN1 ATP sensitivity. Interacts with STX7, STX8 and STX12. Interacts with JPT2. Found in a complex with LSM12, TPCN1 and TPCN2. In terms of processing, N-glycosylated. In terms of tissue distribution, widely expressed. Expressed at relatively high level in kidney, liver and lung, and in the kidney it is expressed at inner medullary collecting ducts.

It localises to the lysosome membrane. The protein resides in the endosome membrane. The protein localises to the early endosome membrane. It is found in the recycling endosome membrane. The enzyme catalyses Na(+)(in) = Na(+)(out). The catalysed reaction is Ca(2+)(in) = Ca(2+)(out). With respect to regulation, na(+) current is inhibited by ATP in a MTORC-dependent manner. ATP sensitivity is independent of PI(3,5)P2. Probably regulated by Mg(2+) ions, cytosolic Mg(2+) selectively inhibits outward current while lysosomal Mg(2+) modestly inhibits both the outward and inward currents. In the absence of Mg(2+), NAADP readily activates TPCN2, with properties similar to PI(3,5)P2. Both current elicited by PI(3,5)P2 as well as NAADP are inhibited by tetrandrine. In terms of biological role, intracellular channel initially characterized as a non-selective Ca(2+)-permeable channel activated by NAADP (nicotinic acid adenine dinucleotide phosphate), it is also a voltage-gated highly-selective Na(+) channel activated directly by PI(3,5)P2 (phosphatidylinositol 3,5-bisphosphate) that senses pH changes and confers electrical excitability to organelles. Localizes to the early and recycling endosomes membranes where it plays a role in the uptake and processing of proteins and regulates organellar membrane excitability, membrane trafficking and pH homeostasis. Ion selectivity is not fixed but rather agonist-dependent and under defined ionic conditions, can be readily activated by both NAADP and PI(3,5)P2. Required for mTOR-dependent nutrient sensing. The sequence is that of Two pore calcium channel protein 1 (Tpcn1) from Rattus norvegicus (Rat).